The primary structure comprises 462 residues: 3-ketoacyl CoA thiolase 1, peroxisomal (462 aa).

A peroxisome-targeting transit peptide spans methionine 1–cysteine 34. The active-site Acyl-thioester intermediate is the cysteine 138. Active-site proton acceptor residues include histidine 393 and cysteine 425. Residue glycine 427 coordinates substrate.

It belongs to the thiolase-like superfamily. Thiolase family. In terms of assembly, homodimer.

It is found in the peroxisome. It carries out the reaction an acyl-CoA + acetyl-CoA = a 3-oxoacyl-CoA + CoA. It functions in the pathway aromatic compound metabolism. The protein operates within lipid metabolism; fatty acid metabolism. Its function is as follows. Component of the floral volatile benzenoid/phenylpropanoid (FVBP) biosynthetic pathway. Thiolase that catalyzes the conversion of 3-oxo-3-phenylpropionyl-CoA (benzoylacetyl-CoA) to benzoyl-CoA. The protein is 3-ketoacyl CoA thiolase 1, peroxisomal of Petunia hybrida (Petunia).